The primary structure comprises 275 residues: Large ribosomal subunit protein uL2 (275 aa).

The interval 224–275 is disordered; it reads AMNPVDHPHGGGEAKAGQGNPHPVTPWGVPTKGYKTRKNKRTQQFIVRDRRG.

The protein belongs to the universal ribosomal protein uL2 family. As to quaternary structure, part of the 50S ribosomal subunit. Forms a bridge to the 30S subunit in the 70S ribosome.

Its function is as follows. One of the primary rRNA binding proteins. Required for association of the 30S and 50S subunits to form the 70S ribosome, for tRNA binding and peptide bond formation. It has been suggested to have peptidyltransferase activity; this is somewhat controversial. Makes several contacts with the 16S rRNA in the 70S ribosome. This Xanthomonas oryzae pv. oryzae (strain MAFF 311018) protein is Large ribosomal subunit protein uL2.